Consider the following 310-residue polypeptide: Glutaminase (310 aa).

S67, N118, E161, N168, Y192, Y244, and V262 together coordinate substrate.

This sequence belongs to the glutaminase family. In terms of assembly, homotetramer.

The enzyme catalyses L-glutamine + H2O = L-glutamate + NH4(+). The protein is Glutaminase of Legionella pneumophila (strain Lens).